The following is a 341-amino-acid chain: S-adenosylmethionine:tRNA ribosyltransferase-isomerase (341 aa).

This sequence belongs to the QueA family. Monomer.

It is found in the cytoplasm. The enzyme catalyses 7-aminomethyl-7-carbaguanosine(34) in tRNA + S-adenosyl-L-methionine = epoxyqueuosine(34) in tRNA + adenine + L-methionine + 2 H(+). Its pathway is tRNA modification; tRNA-queuosine biosynthesis. Its function is as follows. Transfers and isomerizes the ribose moiety from AdoMet to the 7-aminomethyl group of 7-deazaguanine (preQ1-tRNA) to give epoxyqueuosine (oQ-tRNA). The polypeptide is S-adenosylmethionine:tRNA ribosyltransferase-isomerase (Trichlorobacter lovleyi (strain ATCC BAA-1151 / DSM 17278 / SZ) (Geobacter lovleyi)).